The sequence spans 216 residues: Large ribosomal subunit protein uL24m (216 aa).

Residues 1-9 (MRLTLLLEM) constitute a mitochondrion transit peptide. The 34-residue stretch at 56–89 (YFRGDTVEVLHGKDAGKQGKVTQVVRARNWVVVD) folds into the KOW domain.

The protein belongs to the universal ribosomal protein uL24 family. In terms of assembly, component of the mitochondrial ribosome large subunit (39S) which comprises a 16S rRNA and about 50 distinct proteins. Ubiquitous. Expressed at greater levels in the kidney, adipose tissue, muscle and liver than the brain, heart, ovary and lung.

The protein resides in the mitochondrion. This is Large ribosomal subunit protein uL24m (mrpl24) from Xenopus laevis (African clawed frog).